Here is a 303-residue protein sequence, read N- to C-terminus: Acetaldehyde dehydrogenase (303 aa).

Catalysis depends on Cys-130, which acts as the Acyl-thioester intermediate. Residues 161–169 (SVGPGTRKN) and Asn-272 each bind NAD(+).

Belongs to the acetaldehyde dehydrogenase family.

The catalysed reaction is acetaldehyde + NAD(+) + CoA = acetyl-CoA + NADH + H(+). This is Acetaldehyde dehydrogenase from Verminephrobacter eiseniae (strain EF01-2).